A 158-amino-acid polypeptide reads, in one-letter code: 2-C-methyl-D-erythritol 2,4-cyclodiphosphate synthase (158 aa).

Residues Asp-8 and His-10 each contribute to the a divalent metal cation site. 4-CDP-2-C-methyl-D-erythritol 2-phosphate-binding positions include Asp-8 to His-10 and His-34 to Ser-35. His-42 serves as a coordination point for a divalent metal cation. 4-CDP-2-C-methyl-D-erythritol 2-phosphate-binding positions include Asp-56 to Gly-58, Phe-61 to Asp-65, Thr-132 to Glu-135, and Phe-139.

The protein belongs to the IspF family. As to quaternary structure, homotrimer. A divalent metal cation is required as a cofactor.

The catalysed reaction is 4-CDP-2-C-methyl-D-erythritol 2-phosphate = 2-C-methyl-D-erythritol 2,4-cyclic diphosphate + CMP. It participates in isoprenoid biosynthesis; isopentenyl diphosphate biosynthesis via DXP pathway; isopentenyl diphosphate from 1-deoxy-D-xylulose 5-phosphate: step 4/6. Functionally, involved in the biosynthesis of isopentenyl diphosphate (IPP) and dimethylallyl diphosphate (DMAPP), two major building blocks of isoprenoid compounds. Catalyzes the conversion of 4-diphosphocytidyl-2-C-methyl-D-erythritol 2-phosphate (CDP-ME2P) to 2-C-methyl-D-erythritol 2,4-cyclodiphosphate (ME-CPP) with a corresponding release of cytidine 5-monophosphate (CMP). The polypeptide is 2-C-methyl-D-erythritol 2,4-cyclodiphosphate synthase (Natranaerobius thermophilus (strain ATCC BAA-1301 / DSM 18059 / JW/NM-WN-LF)).